Reading from the N-terminus, the 188-residue chain is Sec-independent protein translocase protein TatB (188 aa).

Residues 1–21 (MFDIGWSELVVIGVVALVAIG) form a helical membrane-spanning segment. A disordered region spans residues 147-188 (LPVPAETHALATTDLAPPDLAHPAPAHPEPTNSEPAKDAKAS). Residues 160 to 170 (DLAPPDLAHPA) show a composition bias toward low complexity.

This sequence belongs to the TatB family. In terms of assembly, the Tat system comprises two distinct complexes: a TatABC complex, containing multiple copies of TatA, TatB and TatC subunits, and a separate TatA complex, containing only TatA subunits. Substrates initially bind to the TatABC complex, which probably triggers association of the separate TatA complex to form the active translocon.

The protein localises to the cell inner membrane. Its function is as follows. Part of the twin-arginine translocation (Tat) system that transports large folded proteins containing a characteristic twin-arginine motif in their signal peptide across membranes. Together with TatC, TatB is part of a receptor directly interacting with Tat signal peptides. TatB may form an oligomeric binding site that transiently accommodates folded Tat precursor proteins before their translocation. The sequence is that of Sec-independent protein translocase protein TatB from Rhodopseudomonas palustris (strain HaA2).